A 2188-amino-acid chain; its full sequence is Glutamate synthase 2 [NADH], chloroplastic (2188 aa).

A chloroplast-targeting transit peptide spans 1–30 (MSAAQGLALKLRAAPAAGGVRGEKRRRAAS). Disordered regions lie at residues 14–40 (APAA…ARPR) and 61–94 (VAPR…PESS). The span at 65–80 (ASASRQAEAGAGAGAA) shows a compositional bias: low complexity. Catalysis depends on Cys107, which acts as the Nucleophile. The Glutamine amidotransferase type-2 domain maps to 107-511 (CGVGFIAELS…PGMMLLVDFE (405 aa)). 1198–1255 (LAETHQTLVANGLRGRAVLQTDGQMKTGRDVAVACLLGAEEFGFSTAPLITLGCIMMR) contributes to the FMN binding site. 3 residues coordinate [3Fe-4S] cluster: Cys1251, Cys1257, and Cys1262. 1974 to 1988 (GGGDTGTDCIGTSIR) lines the NAD(+) pocket.

The protein belongs to the glutamate synthase family. Monomer. The cofactor is [3Fe-4S] cluster. FAD is required as a cofactor. It depends on FMN as a cofactor. In terms of tissue distribution, expressed in leaf blades and sheaths.

Its subcellular location is the plastid. It is found in the chloroplast. It carries out the reaction 2 L-glutamate + NAD(+) = L-glutamine + 2-oxoglutarate + NADH + H(+). The protein operates within amino-acid biosynthesis; L-glutamate biosynthesis via GLT pathway; L-glutamate from 2-oxoglutarate and L-glutamine (NAD(+) route): step 1/1. It functions in the pathway energy metabolism; nitrogen metabolism. Functionally, involved in glutamate biosynthesis. This chain is Glutamate synthase 2 [NADH], chloroplastic, found in Oryza sativa subsp. japonica (Rice).